A 228-amino-acid polypeptide reads, in one-letter code: MAKLKEPIIAINFKTYIEATGKRALEIAKAAEKVYKETGVTIVVAPQLVDLRMIAESVEIPVFAQHIDPIKPGSHTGHVLPEAVKEAGAVGTLLNHSENRMILADLEAAIRRAEEVGLMTMVCSNNPAVSAAVAALNPDYVAVEPPELIGTGIPVSKAKPEVITNTVELVKKVNPEVKVLCGAGISTGEDVKKAIELGTVGVLLASGVTKAKDPEKAIWDLVSGIIKE.

12–14 (NFK) contributes to the substrate binding site. His96 functions as the Electrophile in the catalytic mechanism. Catalysis depends on Glu144, which acts as the Proton acceptor. Residues Ile149, Gly184, and 205 to 206 (AS) each bind substrate.

Belongs to the triosephosphate isomerase family. Homotetramer; dimer of dimers.

Its subcellular location is the cytoplasm. The enzyme catalyses D-glyceraldehyde 3-phosphate = dihydroxyacetone phosphate. The protein operates within carbohydrate biosynthesis; gluconeogenesis. Its pathway is carbohydrate degradation; glycolysis; D-glyceraldehyde 3-phosphate from glycerone phosphate: step 1/1. In terms of biological role, involved in the gluconeogenesis. Catalyzes stereospecifically the conversion of dihydroxyacetone phosphate (DHAP) to D-glyceraldehyde-3-phosphate (G3P). The chain is Triosephosphate isomerase from Pyrococcus furiosus (strain ATCC 43587 / DSM 3638 / JCM 8422 / Vc1).